A 412-amino-acid chain; its full sequence is Phosphoribosylamine--glycine ligase (412 aa).

The region spanning 108–309 (KSIMKKYGVP…LAQAIIDILA (202 aa)) is the ATP-grasp domain. Residue 134–190 (LDEKGVPLVIKADGLAAGKGVTVAFDIETAKSALADIFSGSQGKVVIEEFLDGEEFS) coordinates ATP. The Mg(2+) site is built by glutamate 279 and asparagine 281.

Belongs to the GARS family. Mg(2+) is required as a cofactor. It depends on Mn(2+) as a cofactor.

It carries out the reaction 5-phospho-beta-D-ribosylamine + glycine + ATP = N(1)-(5-phospho-beta-D-ribosyl)glycinamide + ADP + phosphate + H(+). Its pathway is purine metabolism; IMP biosynthesis via de novo pathway; N(1)-(5-phospho-D-ribosyl)glycinamide from 5-phospho-alpha-D-ribose 1-diphosphate: step 2/2. In Lactococcus lactis subsp. lactis (strain IL1403) (Streptococcus lactis), this protein is Phosphoribosylamine--glycine ligase.